The following is a 338-amino-acid chain: Lipoyl synthase (338 aa).

The interval 1-24 (MTTVQEAVPNLIPTQDATPRPAPK) is disordered. [4Fe-4S] cluster contacts are provided by Cys-84, Cys-89, Cys-95, Cys-110, Cys-114, Cys-117, and Ser-324. A Radical SAM core domain is found at 96-313 (FSGGTATFMI…AEEGYKMGFK (218 aa)).

The protein belongs to the radical SAM superfamily. Lipoyl synthase family. [4Fe-4S] cluster is required as a cofactor.

Its subcellular location is the cytoplasm. The catalysed reaction is [[Fe-S] cluster scaffold protein carrying a second [4Fe-4S](2+) cluster] + N(6)-octanoyl-L-lysyl-[protein] + 2 oxidized [2Fe-2S]-[ferredoxin] + 2 S-adenosyl-L-methionine + 4 H(+) = [[Fe-S] cluster scaffold protein] + N(6)-[(R)-dihydrolipoyl]-L-lysyl-[protein] + 4 Fe(3+) + 2 hydrogen sulfide + 2 5'-deoxyadenosine + 2 L-methionine + 2 reduced [2Fe-2S]-[ferredoxin]. Its pathway is protein modification; protein lipoylation via endogenous pathway; protein N(6)-(lipoyl)lysine from octanoyl-[acyl-carrier-protein]: step 2/2. In terms of biological role, catalyzes the radical-mediated insertion of two sulfur atoms into the C-6 and C-8 positions of the octanoyl moiety bound to the lipoyl domains of lipoate-dependent enzymes, thereby converting the octanoylated domains into lipoylated derivatives. The chain is Lipoyl synthase from Pseudomonas putida (strain W619).